Here is a 401-residue protein sequence, read N- to C-terminus: Phosphoglycerate kinase (401 aa).

Substrate is bound by residues 20–22, R35, 58–61, R117, and R154; these read DFN and HLGR. Residues K204, G298, E329, and 358 to 361 each bind ATP; that span reads GGDS.

The protein belongs to the phosphoglycerate kinase family. In terms of assembly, monomer.

It localises to the cytoplasm. It catalyses the reaction (2R)-3-phosphoglycerate + ATP = (2R)-3-phospho-glyceroyl phosphate + ADP. Its pathway is carbohydrate degradation; glycolysis; pyruvate from D-glyceraldehyde 3-phosphate: step 2/5. The protein is Phosphoglycerate kinase of Bifidobacterium adolescentis (strain ATCC 15703 / DSM 20083 / NCTC 11814 / E194a).